The primary structure comprises 446 residues: MHVLLSKKIARFLLISFVFVLALMVTINHPKTKQMSEQYVTPYLPKSLQPIAKISAEEQRRIQSEQEEAELKQSLEGEAIRNATVNAIKEKIKSYGGNETTLGFMVPSYINHRGSPPKACFVSLITERDSMTQILQSIDEVQVKFNKNFAYPWVFISQGELDGMKQEMIRQAITDSMNGDPELINIKFAEIPADEWVYPEWIDENKAAESLISLANVPDGDSRAVRYQARYFAGFFWRHPVLDEFDWYWRVDPGIKLYCDIDHDLFRWMQDEGKVFGFTLSMSEAKEANEKIWDVTKKFAKDFPKFISENNFKSFITKKDSEDFNNCEFTSNFEIGNLNFYRSPAYRKFFNYIDEEGGIFYWKWSDSIIHTIGLSMLLPKDKIHFFENIGFHYDKYNNCPLNDDIWNQYNCNCDQGNDFTFRSGSCGGHYFDIMKKDKPEGWDRLP.

The Cytoplasmic portion of the chain corresponds to 1 to 8; sequence MHVLLSKK. A helical; Signal-anchor for type II membrane protein membrane pass occupies residues 9 to 29; that stretch reads IARFLLISFVFVLALMVTINH. The interval 30-114 is stem region; that stretch reads PKTKQMSEQY…MVPSYINHRG (85 aa). Residues 30–446 lie on the Lumenal side of the membrane; that stretch reads PKTKQMSEQY…DKPEGWDRLP (417 aa). N-linked (GlcNAc...) asparagine glycans are attached at residues N82 and N98. The interval 115–446 is catalytic; sequence SPPKACFVSL…DKPEGWDRLP (332 aa). Residue E334 is the Nucleophile of the active site.

The protein belongs to the glycosyltransferase 15 family.

Its subcellular location is the membrane. It functions in the pathway protein modification; protein glycosylation. Glycosyltransferase that transfers an alpha-D-mannosyl residue from GDP-mannose into lipid-linked oligosaccharide, forming an alpha-(1-&gt;2)-D-mannosyl-D-mannose linkage. Required for addition of mannosylphosphate in yeast mannan. Recognizes any oligosaccharides with at least one alpha-1,2-linked mannobiose unit. This Saccharomyces cerevisiae (strain ATCC 204508 / S288c) (Baker's yeast) protein is Mannosyltransferase KTR6 (KTR6).